The sequence spans 333 residues: Galactinol synthase 1 (333 aa).

Lys-104 is an active-site residue. Mn(2+) contacts are provided by Asp-120, Asp-122, and His-257.

The protein belongs to the glycosyltransferase 8 family. Galactosyltransferase subfamily. It depends on a divalent metal cation as a cofactor. As to expression, expressed in source leaves, specifically in the mesophyll.

The protein localises to the cytoplasm. It carries out the reaction myo-inositol + UDP-alpha-D-galactose = alpha-D-galactosyl-(1-&gt;3)-1D-myo-inositol + UDP + H(+). In terms of biological role, major galactinol synthase mainly involved in the biosynthesis of storage raffinose family oligosaccharides (RFOs) that function as osmoprotectants. May promote plant stress tolerance. This chain is Galactinol synthase 1 (GOLS1), found in Ajuga reptans (Bugle).